The chain runs to 207 residues: Ribosomal RNA small subunit methyltransferase G (207 aa).

S-adenosyl-L-methionine is bound by residues G75, L80, 126-127 (VE), and R141.

This sequence belongs to the methyltransferase superfamily. RNA methyltransferase RsmG family.

Its subcellular location is the cytoplasm. It catalyses the reaction guanosine(527) in 16S rRNA + S-adenosyl-L-methionine = N(7)-methylguanosine(527) in 16S rRNA + S-adenosyl-L-homocysteine. Its function is as follows. Specifically methylates the N7 position of guanine in position 527 of 16S rRNA. The sequence is that of Ribosomal RNA small subunit methyltransferase G from Psychromonas ingrahamii (strain DSM 17664 / CCUG 51855 / 37).